We begin with the raw amino-acid sequence, 212 residues long: Thymidylate kinase (212 aa).

11–18 is a binding site for ATP; it reads GPEGAGKT.

The protein belongs to the thymidylate kinase family.

It carries out the reaction dTMP + ATP = dTDP + ADP. Phosphorylation of dTMP to form dTDP in both de novo and salvage pathways of dTTP synthesis. This chain is Thymidylate kinase, found in Streptococcus pneumoniae (strain ATCC 700669 / Spain 23F-1).